Consider the following 736-residue polypeptide: Elongation factor 2 (736 aa).

A tr-type G domain is found at 18-261 (EQIRNIGITA…MVVKHIPNPR (244 aa)). GTP-binding positions include 27-34 (AHVDHGKT), 93-97 (DTPGH), and 147-150 (NKID). Histidine 602 bears the Diphthamide mark.

Belongs to the TRAFAC class translation factor GTPase superfamily. Classic translation factor GTPase family. EF-G/EF-2 subfamily.

Its subcellular location is the cytoplasm. Functionally, catalyzes the GTP-dependent ribosomal translocation step during translation elongation. During this step, the ribosome changes from the pre-translocational (PRE) to the post-translocational (POST) state as the newly formed A-site-bound peptidyl-tRNA and P-site-bound deacylated tRNA move to the P and E sites, respectively. Catalyzes the coordinated movement of the two tRNA molecules, the mRNA and conformational changes in the ribosome. The polypeptide is Elongation factor 2 (Desulfurococcus amylolyticus (strain DSM 18924 / JCM 16383 / VKM B-2413 / 1221n) (Desulfurococcus kamchatkensis)).